The sequence spans 334 residues: DNA-directed RNA polymerase subunit alpha (334 aa).

Residues 1–234 are alpha N-terminal domain (alpha-NTD); the sequence is MQRSVHELLT…QQLAVFVDFD (234 aa). Residues 248–334 form an alpha C-terminal domain (alpha-CTD) region; the sequence is IDPILLRPVD…LRGDDRVLGG (87 aa).

Belongs to the RNA polymerase alpha chain family. As to quaternary structure, homodimer. The RNAP catalytic core consists of 2 alpha, 1 beta, 1 beta' and 1 omega subunit. When a sigma factor is associated with the core the holoenzyme is formed, which can initiate transcription.

The enzyme catalyses RNA(n) + a ribonucleoside 5'-triphosphate = RNA(n+1) + diphosphate. DNA-dependent RNA polymerase catalyzes the transcription of DNA into RNA using the four ribonucleoside triphosphates as substrates. In Marinobacter nauticus (strain ATCC 700491 / DSM 11845 / VT8) (Marinobacter aquaeolei), this protein is DNA-directed RNA polymerase subunit alpha.